Consider the following 345-residue polypeptide: Putative membrane protein ORF59 (345 aa).

4 consecutive transmembrane segments (helical) span residues 46-63, 101-118, 147-165, and 265-286; these read LVFA…MMLI, IVFV…LVFL, IFGI…FSIL, and VVPV…WMVI.

The protein localises to the membrane. The chain is Putative membrane protein ORF59 (ORF59) from Ictalurid herpesvirus 1 (strain Auburn) (IcHV-1).